The primary structure comprises 445 residues: Probable spore coat protein sigD (445 aa).

Residues methionine 1 to glycine 20 form the signal peptide. Positions glutamine 21–arginine 139 constitute a DSCP-N domain. Polar residues predominate over residues glutamate 141–glutamine 159. The tract at residues glutamate 141 to arginine 161 is disordered. Follistatin-like domains lie at alanine 178–tyrosine 201, glycine 213–valine 237, isoleucine 272–valine 295, valine 324–leucine 348, valine 368–alanine 391, and valine 416–valine 439.

Functionally, may contribute to the structure of the coat at the interface between the middle, cellulosic layer and the outer, electron-dense, proteinaceous layer. This is Probable spore coat protein sigD (sigD) from Dictyostelium discoideum (Social amoeba).